The chain runs to 335 residues: Ubiquinol oxidase 1b, mitochondrial (335 aa).

The N-terminal 47 residues, 1 to 47 (MSSRMAGATLLRHLGPRLFAAEPVYSGLAASARGVMPAAARIFPARM), are a transit peptide targeting the mitochondrion. A helical transmembrane segment spans residues 160-180 (ALLLETVAGVPGMVGGMLLHL). Positions 164, 203, and 206 each coordinate Fe cation. The helical transmembrane segment at 222 to 242 (ALVLAAQGVFFNAYFVGYLVS) threads the bilayer. Glutamate 254, glutamate 305, and histidine 308 together coordinate Fe cation.

The protein belongs to the alternative oxidase family. Fe cation serves as cofactor.

It localises to the mitochondrion inner membrane. It catalyses the reaction 2 a ubiquinol + O2 = 2 a ubiquinone + 2 H2O. Its function is as follows. Catalyzes the cyanide-resistant oxidation of ubiquinol and the reduction of molecular oxygen to water, but does not translocate protons and consequently is not linked to oxidative phosphorylation. May increase respiration when the cytochrome respiratory pathway is restricted, or in response to low temperatures. The polypeptide is Ubiquinol oxidase 1b, mitochondrial (Oryza sativa subsp. japonica (Rice)).